Here is a 242-residue protein sequence, read N- to C-terminus: Ubiquinone biosynthesis O-methyltransferase (242 aa).

Residues R44, G64, D85, and M129 each coordinate S-adenosyl-L-methionine.

This sequence belongs to the methyltransferase superfamily. UbiG/COQ3 family.

It carries out the reaction a 3-demethylubiquinol + S-adenosyl-L-methionine = a ubiquinol + S-adenosyl-L-homocysteine + H(+). The catalysed reaction is a 3-(all-trans-polyprenyl)benzene-1,2-diol + S-adenosyl-L-methionine = a 2-methoxy-6-(all-trans-polyprenyl)phenol + S-adenosyl-L-homocysteine + H(+). Its pathway is cofactor biosynthesis; ubiquinone biosynthesis. Functionally, O-methyltransferase that catalyzes the 2 O-methylation steps in the ubiquinone biosynthetic pathway. The protein is Ubiquinone biosynthesis O-methyltransferase of Klebsiella pneumoniae subsp. pneumoniae (strain ATCC 700721 / MGH 78578).